Reading from the N-terminus, the 469-residue chain is Spliceosome-associated protein CWC27 homolog (469 aa).

N-acetylserine is present on Ser2. A PPIase cyclophilin-type domain is found at 11–166 (TNGKVLLKTT…NPHRIKSCEV (156 aa)). The segment covering 175–193 (TPREIKKPKNEKPEEEVKK) has biased composition (basic and acidic residues). Disordered stretches follow at residues 175-415 (TPRE…DDEG) and 428-469 (RKVK…KERR). Residues 206–229 (SFGEEAEEEEEEVNRVSQSMKGRS) are a coiled coil. Over residues 231 to 241 (SSHDLLKDDPH) the composition is skewed to basic and acidic residues. The segment covering 256 to 278 (TGDLEDDGEDDSAERDEYMEDDE) has biased composition (acidic residues). Basic and acidic residues-rich tracts occupy residues 302–341 (GDGEKKPASRSEELRKEARQLKRELLAAKQKKETAIKVEE) and 356–368 (EYRREKQKYEALR). Residues 309 to 371 (ASRSEELRKE…QKYEALRKQQ (63 aa)) adopt a coiled-coil conformation. Positions 384–403 (ALLSQFKSKLTQAITETPEN) are enriched in polar residues. The span at 454-469 (RREESKKLLREKKERR) shows a compositional bias: basic and acidic residues.

This sequence belongs to the cyclophilin-type PPIase family. As to quaternary structure, part of the activated spliceosome B/catalytic step 1 spliceosome, one of the forms of the spliceosome which has a well-formed active site but still cannot catalyze the branching reaction and is composed at least of 52 proteins, the U2, U5 and U6 snRNAs and the pre-mRNA. Recruited during early steps of activated spliceosome B maturation, it is probably one of the first proteins released from this complex as he matures to the spliceosome C complex. Component of the minor spliceosome, which splices U12-type introns.

It is found in the nucleus. Its function is as follows. As part of the spliceosome, plays a role in pre-mRNA splicing. Probable inactive PPIase with no peptidyl-prolyl cis-trans isomerase activity. As a component of the minor spliceosome, involved in the splicing of U12-type introns in pre-mRNAs. This Mus musculus (Mouse) protein is Spliceosome-associated protein CWC27 homolog.